An 88-amino-acid polypeptide reads, in one-letter code: Small ribosomal subunit protein uS15 (88 aa).

It belongs to the universal ribosomal protein uS15 family. Part of the 30S ribosomal subunit. Forms a bridge to the 50S subunit in the 70S ribosome, contacting the 23S rRNA.

Its function is as follows. One of the primary rRNA binding proteins, it binds directly to 16S rRNA where it helps nucleate assembly of the platform of the 30S subunit by binding and bridging several RNA helices of the 16S rRNA. Functionally, forms an intersubunit bridge (bridge B4) with the 23S rRNA of the 50S subunit in the ribosome. The protein is Small ribosomal subunit protein uS15 of Pelobacter propionicus (strain DSM 2379 / NBRC 103807 / OttBd1).